Consider the following 360-residue polypeptide: Protein OSB4, chloroplastic (360 aa).

The N-terminal 61 residues, 1 to 61 (MQFLGRSISK…AEKSSEEWPR (61 aa)), are a transit peptide targeting the chloroplast. A disordered region spans residues 28-64 (SQQFLSTSSTESSSRTRGGGGGNRAEKSSEEWPRPME). Residues 33–43 (STSSTESSSRT) are compositionally biased toward low complexity. The span at 51-61 (RAEKSSEEWPR) shows a compositional bias: basic and acidic residues. In terms of domain architecture, SSB spans 71 to 188 (IANSIDLIGY…VMVRDLHYIE (118 aa)). PDF region regions lie at residues 224-276 (WFDL…SELK) and 296-344 (WKDL…EKLP).

It localises to the plastid. Its subcellular location is the chloroplast. Its function is as follows. Binds single-stranded DNA. This chain is Protein OSB4, chloroplastic (OSB4), found in Arabidopsis thaliana (Mouse-ear cress).